A 540-amino-acid polypeptide reads, in one-letter code: Acyl-CoA synthetase 7 (540 aa).

ATP is bound by residues serine 186–lysine 194, aspartate 415, arginine 430, and lysine 522. The Microbody targeting signal motif lies at alanine 538 to leucine 540.

This sequence belongs to the ATP-dependent AMP-binding enzyme family. As to expression, expressed in intestine.

It localises to the peroxisome. It carries out the reaction nonanoate + ATP + CoA = nonanoyl-CoA + AMP + diphosphate. The catalysed reaction is IC-asc-C7 + ATP + CoA = IC-asc-C7-CoA + AMP + diphosphate. It catalyses the reaction IC-asc-C9 + ATP + CoA = IC-asc-C9-CoA + AMP + diphosphate. Plays a role in ascaroside pheromones biosynthesis, which regulates development and behavior. Specifically, activates the side chain of medium-chain indol-3-carbonyl (IC)-ascarosides for shortening through beta-oxidation. Converts IC-asc-C7 and IC-asc-C9 into IC-asc-C7-CoA and IC-asc-C9-CoA, respectively. May play a role in fatty-acid metabolism by activating and converting nonanoate (C9) into nonanoyl-CoA (C9-CoA). The polypeptide is Acyl-CoA synthetase 7 (Caenorhabditis elegans).